Here is a 114-residue protein sequence, read N- to C-terminus: Protein vCCL3 (114 aa).

A signal peptide spans 1–26 (MWSMCWVLRAHLGLLFWVAVIELCAA).

In terms of biological role, acts as a highly selective agonist for human lymphoactin receptor XCR1. The protein is Protein vCCL3 (K4.1) of Human herpesvirus 8 type P (isolate GK18) (HHV-8).